The chain runs to 64 residues: MMITRGWEGWGRRGARGAGTGTGLGGPGTPESSVTPPEFPLPPATRITPNFPNTLDPAISRSSS.

Residues 1 to 64 (MMITRGWEGW…LDPAISRSSS (64 aa)) form a disordered region. The segment covering 16 to 28 (RGAGTGTGLGGPG) has biased composition (gly residues).

This is an uncharacterized protein from Homo sapiens (Human).